The primary structure comprises 301 residues: ATP synthase gamma chain (301 aa).

Belongs to the ATPase gamma chain family. As to quaternary structure, F-type ATPases have 2 components, CF(1) - the catalytic core - and CF(0) - the membrane proton channel. CF(1) has five subunits: alpha(3), beta(3), gamma(1), delta(1), epsilon(1). CF(0) has three main subunits: a, b and c.

The protein localises to the cell inner membrane. Its function is as follows. Produces ATP from ADP in the presence of a proton gradient across the membrane. The gamma chain is believed to be important in regulating ATPase activity and the flow of protons through the CF(0) complex. This chain is ATP synthase gamma chain, found in Helicobacter pylori (strain P12).